The sequence spans 403 residues: Tyrosine--tRNA ligase (403 aa).

The short motif at 42-51 (PTAPDLHLGH) is the 'HIGH' region element. The 'KMSKS' region signature appears at 226–230 (KMSKS). K229 lines the ATP pocket. Positions 336 to 396 (MPISAVLNKA…GKKAFGRVTL (61 aa)) constitute an S4 RNA-binding domain.

It belongs to the class-I aminoacyl-tRNA synthetase family. TyrS type 2 subfamily. Homodimer.

The protein resides in the cytoplasm. It catalyses the reaction tRNA(Tyr) + L-tyrosine + ATP = L-tyrosyl-tRNA(Tyr) + AMP + diphosphate + H(+). Functionally, catalyzes the attachment of tyrosine to tRNA(Tyr) in a two-step reaction: tyrosine is first activated by ATP to form Tyr-AMP and then transferred to the acceptor end of tRNA(Tyr). The sequence is that of Tyrosine--tRNA ligase from Pseudomonas savastanoi pv. phaseolicola (strain 1448A / Race 6) (Pseudomonas syringae pv. phaseolicola (strain 1448A / Race 6)).